The primary structure comprises 294 residues: Transmembrane protein 178B (294 aa).

A signal peptide spans 1–23 (MAAGKLLLYAGLSLSLCALGMLA). 3 helical membrane passes run 172–192 (AGFMGMAVAIILFGWIIGMLG), 206–226 (LLFLMGGTFCIISLCTCVAGI), and 252–272 (MFCAWGGLGLSLIAGFFCTLA).

It belongs to the TMEM178 family.

The protein resides in the membrane. This is Transmembrane protein 178B (tmem178b) from Danio rerio (Zebrafish).